Reading from the N-terminus, the 316-residue chain is 4-hydroxy-3-methylbut-2-enyl diphosphate reductase (316 aa).

Position 12 (cysteine 12) interacts with [4Fe-4S] cluster. Positions 43 and 81 each coordinate (2E)-4-hydroxy-3-methylbut-2-enyl diphosphate. Dimethylallyl diphosphate-binding residues include histidine 43 and histidine 81. Isopentenyl diphosphate is bound by residues histidine 43 and histidine 81. Cysteine 103 serves as a coordination point for [4Fe-4S] cluster. Position 131 (histidine 131) interacts with (2E)-4-hydroxy-3-methylbut-2-enyl diphosphate. Histidine 131 serves as a coordination point for dimethylallyl diphosphate. Residue histidine 131 participates in isopentenyl diphosphate binding. Catalysis depends on glutamate 133, which acts as the Proton donor. Threonine 170 provides a ligand contact to (2E)-4-hydroxy-3-methylbut-2-enyl diphosphate. Cysteine 198 is a binding site for [4Fe-4S] cluster. Residues serine 226, asparagine 228, and serine 271 each contribute to the (2E)-4-hydroxy-3-methylbut-2-enyl diphosphate site. Dimethylallyl diphosphate-binding residues include serine 226, asparagine 228, and serine 271. The isopentenyl diphosphate site is built by serine 226, asparagine 228, and serine 271.

Belongs to the IspH family. It depends on [4Fe-4S] cluster as a cofactor.

The enzyme catalyses isopentenyl diphosphate + 2 oxidized [2Fe-2S]-[ferredoxin] + H2O = (2E)-4-hydroxy-3-methylbut-2-enyl diphosphate + 2 reduced [2Fe-2S]-[ferredoxin] + 2 H(+). The catalysed reaction is dimethylallyl diphosphate + 2 oxidized [2Fe-2S]-[ferredoxin] + H2O = (2E)-4-hydroxy-3-methylbut-2-enyl diphosphate + 2 reduced [2Fe-2S]-[ferredoxin] + 2 H(+). It participates in isoprenoid biosynthesis; dimethylallyl diphosphate biosynthesis; dimethylallyl diphosphate from (2E)-4-hydroxy-3-methylbutenyl diphosphate: step 1/1. Its pathway is isoprenoid biosynthesis; isopentenyl diphosphate biosynthesis via DXP pathway; isopentenyl diphosphate from 1-deoxy-D-xylulose 5-phosphate: step 6/6. Functionally, catalyzes the conversion of 1-hydroxy-2-methyl-2-(E)-butenyl 4-diphosphate (HMBPP) into a mixture of isopentenyl diphosphate (IPP) and dimethylallyl diphosphate (DMAPP). Acts in the terminal step of the DOXP/MEP pathway for isoprenoid precursor biosynthesis. The sequence is that of 4-hydroxy-3-methylbut-2-enyl diphosphate reductase from Bacillus cereus (strain B4264).